The following is a 172-amino-acid chain: Cell division protein SepF (172 aa).

The disordered stretch occupies residues 16–78 (DGDEHYEPQP…RAASNRDDSS (63 aa)). A compositionally biased stretch (basic and acidic residues) spans 17–48 (GDEHYEPQPEGKQTRPAQKNEEYVDQEIRHTE).

It belongs to the SepF family. Homodimer. Interacts with FtsZ.

It is found in the cytoplasm. Cell division protein that is part of the divisome complex and is recruited early to the Z-ring. Probably stimulates Z-ring formation, perhaps through the cross-linking of FtsZ protofilaments. Its function overlaps with FtsA. This Renibacterium salmoninarum (strain ATCC 33209 / DSM 20767 / JCM 11484 / NBRC 15589 / NCIMB 2235) protein is Cell division protein SepF.